The following is a 147-amino-acid chain: Interleukin-4 (147 aa).

The N-terminal stretch at 1–24 (MGLSPHLAVTLFCFLICTGNGIHG) is a signal peptide. Cys47 and Cys87 are disulfide-bonded. 3 N-linked (GlcNAc...) asparagine glycosylation sites follow: Asn61, Asn90, and Asn117.

It belongs to the IL-4/IL-13 family.

The protein localises to the secreted. Its function is as follows. Participates in at least several B-cell activation processes as well as of other cell types. It is a costimulator of DNA-synthesis. It induces the expression of class II MHC molecules on resting B-cells. It enhances both secretion and cell surface expression of IgE and IgG1. It also regulates the expression of the low affinity Fc receptor for IgE (CD23) on both lymphocytes and monocytes. Positively regulates IL31RA expression in macrophages. Stimulates autophagy in dendritic cells by interfering with mTORC1 signaling and through the induction of RUFY4. The protein is Interleukin-4 (Il4) of Rattus norvegicus (Rat).